The primary structure comprises 132 residues: Large ribosomal subunit protein bL17 (132 aa).

It belongs to the bacterial ribosomal protein bL17 family. As to quaternary structure, part of the 50S ribosomal subunit. Contacts protein L32.

The polypeptide is Large ribosomal subunit protein bL17 (Saccharophagus degradans (strain 2-40 / ATCC 43961 / DSM 17024)).